The sequence spans 502 residues: Glycerol kinase (502 aa).

Residue Thr13 coordinates ADP. 3 residues coordinate ATP: Thr13, Thr14, and Ser15. Position 13 (Thr13) interacts with sn-glycerol 3-phosphate. Arg17 serves as a coordination point for ADP. Sn-glycerol 3-phosphate is bound by residues Arg83, Glu84, Tyr136, and Asp246. The glycerol site is built by Arg83, Glu84, Tyr136, Asp246, and Gln247. Residues Thr268 and Gly311 each contribute to the ADP site. ATP-binding residues include Thr268, Gly311, Gln315, and Gly412. 2 residues coordinate ADP: Gly412 and Asn416.

Belongs to the FGGY kinase family.

The catalysed reaction is glycerol + ATP = sn-glycerol 3-phosphate + ADP + H(+). Its pathway is polyol metabolism; glycerol degradation via glycerol kinase pathway; sn-glycerol 3-phosphate from glycerol: step 1/1. Its activity is regulated as follows. Inhibited by fructose 1,6-bisphosphate (FBP). Functionally, key enzyme in the regulation of glycerol uptake and metabolism. Catalyzes the phosphorylation of glycerol to yield sn-glycerol 3-phosphate. The chain is Glycerol kinase from Francisella tularensis subsp. tularensis (strain FSC 198).